The chain runs to 264 residues: ELL-associated factor 2 (264 aa).

2 disordered regions span residues 114-154 (EGSS…PSSP) and 169-264 (MDQL…DSDD). The segment covering 117 to 142 (SKVQSRIEQQQQQIRNSSKTPNNIKN) has biased composition (polar residues). Low complexity predominate over residues 173-196 (SSSDSSSDSKSSSSSSSSSENSSS). Residues 228–238 (VPDKDASHNRS) show a composition bias toward basic and acidic residues. Polar residues predominate over residues 239–264 (QENSGHMMNTLRSDLQLSESGSDSDD).

The protein belongs to the EAF family.

Its subcellular location is the nucleus speckle. Functionally, may act as a transcriptional transactivator. The polypeptide is ELL-associated factor 2 (EAF2) (Gallus gallus (Chicken)).